The following is a 421-amino-acid chain: MGNITKRGSRDLVADGATLVEESLATTLHSKLYEAIIKEDCNTIKTLLRNHPVNQPLTILANSTRYRLLSQQTQPIFPIHLAAEYRKPQSLLCLLQHGADPEVRDAQGFTTLHLMLLNWPASSTTWSKPSTQIQKILMDIQNNAVLCLCILCDHGAQVNARVDNSNKHSALHLAIIHGTYPVLSFLAQNGAQVNATNESSMTPLHMAADILNKNMIETLIAFGANVNCAISSTGNTALKLAVCTASSKVGRLLAAGVGCIRLLLNNGAQVNAQDHEGQTALHEACFGGREAIISLLLEFEANVNILTRNGESPIYMYLQRSSNIRDRSLLARLLYRTYPLRLSNKQGILPAGIMLPEYQLLRETLVKLSKKPLTLEAICKRSIRNVYGEKYKFHLEKLLPAKLWNSIYGIYDLTYLLKGEP.

8 ANK repeats span residues 27–57 (TLHS…NQPL), 74–103 (QPIF…DPEV), 107–146 (QGFT…NAVL), 166–195 (NKHS…QVNA), 199–228 (SSMT…NVNC), 233–272 (TGNT…QVNA), 276–305 (EGQT…NVNI), and 309–342 (NGES…PLRL).

The polypeptide is Ankyrin repeat domain-containing protein 61 (Ankrd61) (Mus musculus (Mouse)).